The sequence spans 610 residues: GATOR complex protein NPRL3 (610 aa).

Ser-437 is modified (phosphoserine). A disordered region spans residues 474 to 501 (REASEDHSSLASDNIAVQPSSSHKSNFS). The segment covering 482–501 (SLASDNIAVQPSSSHKSNFS) has biased composition (polar residues).

The protein belongs to the NPR3 family. Component of the GATOR complex consisting of mio, Nup44A/Seh1, Im11, Nplr3, Nplr2, Wdr24, Wdr59 and Sec13. Within the GATOR complex, probable component of the GATOR1 subcomplex which is likely composed of Iml1, Nplr2 and Nplr3. Interacts with Nprl2.

Its subcellular location is the cytoplasm. The protein localises to the lysosome. An essential component of the GATOR subcomplex GATOR1 which functions as an inhibitor of the amino acid-sensing branch of the TORC1 signaling pathway. The two GATOR subcomplexes, GATOR1 and GATOR2, regulate the TORC1 pathway in order to mediate metabolic homeostasis, female gametogenesis and the response to amino acid limitation and complete starvation. The function of GATOR1 in negatively regulating the TORC1 pathway is essential for maintaining baseline levels of TORC1 activity under nutrient rich conditions, and for promoting survival during amino acid or complete starvation by inhibiting TORC1-dependent cell growth and promoting catabolic metabolism and autophagy. In addition, this inhibition of TORC1 is necessary to maintain female fertility under normal conditions and during periods of nutrient stress. GATOR1 and GATOR2 act at different stages of oogenesis to regulate TORC1 in order to control meiotic entry and promote oocyte growth and development. After exactly four mitotic cyst divisions, the GATOR1 complex members (Iml1, Nprl2 and Nprl3) down-regulate TORC1 to slow cellular metabolism and promote the mitotic/meiotic transition. At later stages of oogenesis, the mio and Nup44A components of the GATOR2 complex inhibit GATOR1 and thus activate TORC1 to promote meiotic progression, and drive oocyte growth and development. In Drosophila melanogaster (Fruit fly), this protein is GATOR complex protein NPRL3.